A 309-amino-acid polypeptide reads, in one-letter code: 4-diphosphocytidyl-2-C-methyl-D-erythritol kinase (309 aa).

Lys11 is a catalytic residue. 94-104 (PVAAGLAGGSA) lines the ATP pocket. Asp136 is a catalytic residue.

Belongs to the GHMP kinase family. IspE subfamily.

It catalyses the reaction 4-CDP-2-C-methyl-D-erythritol + ATP = 4-CDP-2-C-methyl-D-erythritol 2-phosphate + ADP + H(+). It participates in isoprenoid biosynthesis; isopentenyl diphosphate biosynthesis via DXP pathway; isopentenyl diphosphate from 1-deoxy-D-xylulose 5-phosphate: step 3/6. Its function is as follows. Catalyzes the phosphorylation of the position 2 hydroxy group of 4-diphosphocytidyl-2C-methyl-D-erythritol. The protein is 4-diphosphocytidyl-2-C-methyl-D-erythritol kinase of Synechococcus sp. (strain JA-3-3Ab) (Cyanobacteria bacterium Yellowstone A-Prime).